Consider the following 153-residue polypeptide: 6,7-dimethyl-8-ribityllumazine synthase (153 aa).

Residues F22, 56–58 (AFE), and 80–82 (TVI) contribute to the 5-amino-6-(D-ribitylamino)uracil site. Position 85-86 (85-86 (AT)) interacts with (2S)-2-hydroxy-3-oxobutyl phosphate. The active-site Proton donor is the H88. Position 113 (F113) interacts with 5-amino-6-(D-ribitylamino)uracil. R127 lines the (2S)-2-hydroxy-3-oxobutyl phosphate pocket.

It belongs to the DMRL synthase family.

It catalyses the reaction (2S)-2-hydroxy-3-oxobutyl phosphate + 5-amino-6-(D-ribitylamino)uracil = 6,7-dimethyl-8-(1-D-ribityl)lumazine + phosphate + 2 H2O + H(+). Its pathway is cofactor biosynthesis; riboflavin biosynthesis; riboflavin from 2-hydroxy-3-oxobutyl phosphate and 5-amino-6-(D-ribitylamino)uracil: step 1/2. Catalyzes the formation of 6,7-dimethyl-8-ribityllumazine by condensation of 5-amino-6-(D-ribitylamino)uracil with 3,4-dihydroxy-2-butanone 4-phosphate. This is the penultimate step in the biosynthesis of riboflavin. The chain is 6,7-dimethyl-8-ribityllumazine synthase from Clostridium perfringens (strain 13 / Type A).